We begin with the raw amino-acid sequence, 342 residues long: Dihydroorotate dehydrogenase (quinone) (342 aa).

FMN is bound by residues 61–65 (AGLDK) and T85. K65 lines the substrate pocket. Residue 110–114 (NRMGF) coordinates substrate. The FMN site is built by N138 and N171. N171 is a binding site for substrate. S174 acts as the Nucleophile in catalysis. Residue N176 participates in substrate binding. Residues K216 and T244 each contribute to the FMN site. 245–246 (NT) contacts substrate. FMN contacts are provided by residues G267, G296, and 317–318 (YS).

This sequence belongs to the dihydroorotate dehydrogenase family. Type 2 subfamily. Monomer. It depends on FMN as a cofactor.

It is found in the cell membrane. It catalyses the reaction (S)-dihydroorotate + a quinone = orotate + a quinol. It participates in pyrimidine metabolism; UMP biosynthesis via de novo pathway; orotate from (S)-dihydroorotate (quinone route): step 1/1. Catalyzes the conversion of dihydroorotate to orotate with quinone as electron acceptor. The sequence is that of Dihydroorotate dehydrogenase (quinone) from Pseudomonas aeruginosa (strain UCBPP-PA14).